We begin with the raw amino-acid sequence, 326 residues long: GDP-mannose transporter (326 aa).

Topologically, residues 1-4 (MEKS) are cytoplasmic. A helical membrane pass occupies residues 5 to 25 (ITNSPVLSILSYCAASILMTV). The Lumenal portion of the chain corresponds to 26 to 35 (TNKYVLSGTS). The chain crosses the membrane as a helical span at residues 36–56 (FNLNLALLAVQSIVCLTAISI). Topologically, residues 57–74 (GKSFGLCKFRSFNADEAK) are cytoplasmic. A helical transmembrane segment spans residues 75 to 97 (KWFPIALLLVVMIYTSSKALQFL). Over 98-100 (SIP) the chain is Lumenal. A helical transmembrane segment spans residues 101-123 (VYTIFKNLTIILIAYGEVLWFGG). Residues 124–129 (SVTSMA) are Cytoplasmic-facing. A helical transmembrane segment spans residues 130–152 (LASFVLMVLSSVIAAWSDISGAI). The Lumenal portion of the chain corresponds to 153–163 (AVSGSATTTVT). Residues 164-184 (ALNIGYFWMMSNCFASAAFVL) form a helical membrane-spanning segment. Topologically, residues 185-208 (YMRKRIKLTNFGDFDTTFYNNLLS) are cytoplasmic. Residues 209–229 (IPVLLIASLLFEDWSPANLAV) form a helical membrane-spanning segment. The Lumenal segment spans residues 230–237 (NFPPESRN). Residues 238 to 258 (LIFFSMVVSGLMSIGISYCSA) traverse the membrane as a helical segment. Residues 259–268 (WCVRVTSSTT) are Cytoplasmic-facing. Residues 269–289 (YSMVGALNKLPLALSGIVFFG) form a helical membrane-spanning segment. At 290 to 291 (TP) the chain is on the lumenal side. The helical transmembrane segment at 292-312 (ATFSSVSAIFVGFVAGIVYAV) threads the bilayer. Over 313–326 (AQIQKKKAEAALPK) the chain is Cytoplasmic.

This sequence belongs to the TPT transporter family. SLC35D subfamily. In terms of assembly, homooligomer.

Its subcellular location is the golgi apparatus membrane. The protein localises to the cytoplasmic vesicle membrane. The protein resides in the endoplasmic reticulum membrane. Functionally, involved in the import of GDP-mannose from the cytoplasm into the Golgi lumen. In Yarrowia lipolytica (strain CLIB 122 / E 150) (Yeast), this protein is GDP-mannose transporter (VRG4).